The following is a 499-amino-acid chain: Aspartyl/glutamyl-tRNA(Asn/Gln) amidotransferase subunit B (499 aa).

Belongs to the GatB/GatE family. GatB subfamily. In terms of assembly, heterotrimer of A, B and C subunits.

The catalysed reaction is L-glutamyl-tRNA(Gln) + L-glutamine + ATP + H2O = L-glutaminyl-tRNA(Gln) + L-glutamate + ADP + phosphate + H(+). The enzyme catalyses L-aspartyl-tRNA(Asn) + L-glutamine + ATP + H2O = L-asparaginyl-tRNA(Asn) + L-glutamate + ADP + phosphate + 2 H(+). In terms of biological role, allows the formation of correctly charged Asn-tRNA(Asn) or Gln-tRNA(Gln) through the transamidation of misacylated Asp-tRNA(Asn) or Glu-tRNA(Gln) in organisms which lack either or both of asparaginyl-tRNA or glutaminyl-tRNA synthetases. The reaction takes place in the presence of glutamine and ATP through an activated phospho-Asp-tRNA(Asn) or phospho-Glu-tRNA(Gln). This is Aspartyl/glutamyl-tRNA(Asn/Gln) amidotransferase subunit B from Bifidobacterium longum (strain DJO10A).